Consider the following 554-residue polypeptide: Dihydroxy-acid dehydratase (554 aa).

Asp-78 lines the Mg(2+) pocket. A [2Fe-2S] cluster-binding site is contributed by Cys-119. Mg(2+) is bound by residues Asp-120 and Lys-121. Position 121 is an N6-carboxylysine (Lys-121). Residue Cys-191 participates in [2Fe-2S] cluster binding. Position 444 (Glu-444) interacts with Mg(2+). Ser-470 functions as the Proton acceptor in the catalytic mechanism.

The protein belongs to the IlvD/Edd family. In terms of assembly, homodimer. Requires [2Fe-2S] cluster as cofactor. The cofactor is Mg(2+).

It carries out the reaction (2R)-2,3-dihydroxy-3-methylbutanoate = 3-methyl-2-oxobutanoate + H2O. The enzyme catalyses (2R,3R)-2,3-dihydroxy-3-methylpentanoate = (S)-3-methyl-2-oxopentanoate + H2O. Its pathway is amino-acid biosynthesis; L-isoleucine biosynthesis; L-isoleucine from 2-oxobutanoate: step 3/4. It functions in the pathway amino-acid biosynthesis; L-valine biosynthesis; L-valine from pyruvate: step 3/4. In terms of biological role, functions in the biosynthesis of branched-chain amino acids. Catalyzes the dehydration of (2R,3R)-2,3-dihydroxy-3-methylpentanoate (2,3-dihydroxy-3-methylvalerate) into 2-oxo-3-methylpentanoate (2-oxo-3-methylvalerate) and of (2R)-2,3-dihydroxy-3-methylbutanoate (2,3-dihydroxyisovalerate) into 2-oxo-3-methylbutanoate (2-oxoisovalerate), the penultimate precursor to L-isoleucine and L-valine, respectively. The sequence is that of Dihydroxy-acid dehydratase from Nitratidesulfovibrio vulgaris (strain ATCC 29579 / DSM 644 / CCUG 34227 / NCIMB 8303 / VKM B-1760 / Hildenborough) (Desulfovibrio vulgaris).